The sequence spans 228 residues: Probable 26S proteasome regulatory subunit p28 (228 aa).

ANK repeat units lie at residues 1–30 (MSNY…SLLL), 35–64 (DGRI…NVNL), 71–100 (SGWT…KPDL), 106–135 (QGVT…SVRI), 139–168 (FNQI…SAVN), and 173–203 (QGWT…EYDL).

As to quaternary structure, interacts with RPT3.

Acts as a chaperone during the assembly of the 26S proteasome, specifically of the 19S regulatory complex (RC) and appears to have an overlapping role with RPN14. This Saccharomyces cerevisiae (strain ATCC 204508 / S288c) (Baker's yeast) protein is Probable 26S proteasome regulatory subunit p28 (NAS6).